We begin with the raw amino-acid sequence, 529 residues long: ATP synthase subunit alpha (529 aa).

173-180 (GDRQTGKT) lines the ATP pocket.

The protein belongs to the ATPase alpha/beta chains family. F-type ATPases have 2 components, CF(1) - the catalytic core - and CF(0) - the membrane proton channel. CF(1) has five subunits: alpha(3), beta(3), gamma(1), delta(1), epsilon(1). CF(0) has three main subunits: a(1), b(2) and c(9-12). The alpha and beta chains form an alternating ring which encloses part of the gamma chain. CF(1) is attached to CF(0) by a central stalk formed by the gamma and epsilon chains, while a peripheral stalk is formed by the delta and b chains.

Its subcellular location is the cell membrane. The catalysed reaction is ATP + H2O + 4 H(+)(in) = ADP + phosphate + 5 H(+)(out). Functionally, produces ATP from ADP in the presence of a proton gradient across the membrane. The alpha chain is a regulatory subunit. In Streptomyces lividans, this protein is ATP synthase subunit alpha.